A 387-amino-acid polypeptide reads, in one-letter code: UDP-N-acetylglucosamine--N-acetylmuramyl-(pentapeptide) pyrophosphoryl-undecaprenol N-acetylglucosamine transferase (387 aa).

UDP-N-acetyl-alpha-D-glucosamine is bound by residues 26-28 (TGG), N137, R177, S205, and Q306.

The protein belongs to the glycosyltransferase 28 family. MurG subfamily.

The protein localises to the cell inner membrane. It catalyses the reaction di-trans,octa-cis-undecaprenyl diphospho-N-acetyl-alpha-D-muramoyl-L-alanyl-D-glutamyl-meso-2,6-diaminopimeloyl-D-alanyl-D-alanine + UDP-N-acetyl-alpha-D-glucosamine = di-trans,octa-cis-undecaprenyl diphospho-[N-acetyl-alpha-D-glucosaminyl-(1-&gt;4)]-N-acetyl-alpha-D-muramoyl-L-alanyl-D-glutamyl-meso-2,6-diaminopimeloyl-D-alanyl-D-alanine + UDP + H(+). The protein operates within cell wall biogenesis; peptidoglycan biosynthesis. Its function is as follows. Cell wall formation. Catalyzes the transfer of a GlcNAc subunit on undecaprenyl-pyrophosphoryl-MurNAc-pentapeptide (lipid intermediate I) to form undecaprenyl-pyrophosphoryl-MurNAc-(pentapeptide)GlcNAc (lipid intermediate II). This chain is UDP-N-acetylglucosamine--N-acetylmuramyl-(pentapeptide) pyrophosphoryl-undecaprenol N-acetylglucosamine transferase, found in Rhodospirillum rubrum (strain ATCC 11170 / ATH 1.1.1 / DSM 467 / LMG 4362 / NCIMB 8255 / S1).